The sequence spans 367 residues: Anhydro-N-acetylmuramic acid kinase (367 aa).

11-18 contributes to the ATP binding site; the sequence is GTSLDGVD.

It belongs to the anhydro-N-acetylmuramic acid kinase family.

It carries out the reaction 1,6-anhydro-N-acetyl-beta-muramate + ATP + H2O = N-acetyl-D-muramate 6-phosphate + ADP + H(+). It participates in amino-sugar metabolism; 1,6-anhydro-N-acetylmuramate degradation. Its pathway is cell wall biogenesis; peptidoglycan recycling. In terms of biological role, catalyzes the specific phosphorylation of 1,6-anhydro-N-acetylmuramic acid (anhMurNAc) with the simultaneous cleavage of the 1,6-anhydro ring, generating MurNAc-6-P. Is required for the utilization of anhMurNAc either imported from the medium or derived from its own cell wall murein, and thus plays a role in cell wall recycling. The sequence is that of Anhydro-N-acetylmuramic acid kinase from Rhodopseudomonas palustris (strain HaA2).